A 417-amino-acid polypeptide reads, in one-letter code: MQGPTLAVLGALLAVAVSLPTPAPRVTVYVDPPAYPMPRYNYTERWHTTGPIPSPFADGREQPVEVRYATSAAACDMLALIADPQVGRTLWEAVRRHARAYNATVIWYKIESGCARPLYYMEYTECEPRKHFGYCRYRTPPFWDSFLAGFAYPTDDELGLIMAAPARLVEGQYRRALYIDGTVAYTDFMVSLPAGDCWFSKLGAARGYTFGACFPARDYEQKKVLRLTYLTQYYPQEAHKAIVDYWFMRHGGVVPPYFEESKGYEPPPAADGGSPAPPGDDEAREDEGETEDGAAGREGNGGPPGPEGDGESQTPEANGGAEGEPKPGPSPDADRPEGWPSLEAITHPPPAPATPAAPDAVPVSVGIGIAAAAIACVAAAAAGAYFVYTRRRGAGPLPRKPKKLPAFGNVNYSALPG.

The first 18 residues, 1-18 (MQGPTLAVLGALLAVAVS), serve as a signal peptide directing secretion. Topologically, residues 19 to 360 (LPTPAPRVTV…APATPAAPDA (342 aa)) are virion surface. 2 N-linked (GlcNAc...) asparagine; by host glycosylation sites follow: N41 and N102. Disulfide bonds link C75–C197, C114–C213, and C126–C135. The tract at residues 259-356 (EESKGYEPPP…HPPPAPATPA (98 aa)) is disordered. The segment covering 279 to 292 (GDDEAREDEGETED) has biased composition (acidic residues). A helical transmembrane segment spans residues 361–389 (VPVSVGIGIAAAAIACVAAAAAGAYFVYT). The Intravirion segment spans residues 390 to 417 (RRRGAGPLPRKPKKLPAFGNVNYSALPG).

The protein belongs to the herpesviridae glycoprotein D family.

The protein resides in the virion membrane. Functionally, envelope glycoprotein that binds to host cell entry receptors, promoting the virus entry into host cells. May trigger fusion with host membrane, by recruiting the fusion machinery composed of gB and gH/gL. The protein is Envelope glycoprotein D (gD) of Bovine herpesvirus 1.1 (strain Cooper) (BoHV-1).